The chain runs to 103 residues: Putative septation protein SpoVG (103 aa).

Belongs to the SpoVG family.

Functionally, could be involved in septation. This is Putative septation protein SpoVG from Exiguobacterium sibiricum (strain DSM 17290 / CCUG 55495 / CIP 109462 / JCM 13490 / 255-15).